We begin with the raw amino-acid sequence, 415 residues long: Zinc finger protein ZFMSA12A (415 aa).

The tract at residues 1–36 is disordered; the sequence is MGIQDARWPSEDEETHLLDSSSAEQTRGEKCSDSTP. C2H2-type zinc fingers lie at residues 78 to 100, 106 to 129, 134 to 156, 161 to 183, 189 to 211, 217 to 239, 245 to 267, 273 to 295, 301 to 323, 329 to 351, 357 to 379, and 385 to 407; these read HKCTQCGKCFIYRYELLEHQRLH, YRCSQCGKAFRRTSDLSSHRRTQC, YICIKCGNSFQSIQEKFRHQCVH, FDCSQCGKSFKKMHLLGKHELTH, FTCRQCGKVYPGMSELRSHQKIH, NQCMQCGKFFSSSACLTAHEVRH, QICARCGKAFKNKHDLNLHMRSH, FQCTYCGKRFSVSGNLNIHVRTH, YLCSDCGKAFISAGELQIHRRTH, YKCSVCGRGFTMASKVTLHMRVH, YVCSECGKGFSRGSELKKHSMNH, and YACQLCAKTYTCLNHLKRHLKTH.

The protein resides in the nucleus. This is Zinc finger protein ZFMSA12A from Micropterus salmoides (Largemouth bass).